A 217-amino-acid chain; its full sequence is Pyridoxine/pyridoxamine 5'-phosphate oxidase (217 aa).

Residues 13–16 and K71 contribute to the substrate site; that span reads RREY. Residues 66 to 71, 81 to 82, R87, K88, and Q110 contribute to the FMN site; these read RTVLLK and YT. Substrate contacts are provided by Y128, R132, and S136. Residues 145–146 and W190 each bind FMN; that span reads QS. 196 to 198 lines the substrate pocket; it reads RLH. R200 contacts FMN.

It belongs to the pyridoxamine 5'-phosphate oxidase family. As to quaternary structure, homodimer. It depends on FMN as a cofactor.

The catalysed reaction is pyridoxamine 5'-phosphate + O2 + H2O = pyridoxal 5'-phosphate + H2O2 + NH4(+). The enzyme catalyses pyridoxine 5'-phosphate + O2 = pyridoxal 5'-phosphate + H2O2. Its pathway is cofactor metabolism; pyridoxal 5'-phosphate salvage; pyridoxal 5'-phosphate from pyridoxamine 5'-phosphate: step 1/1. It participates in cofactor metabolism; pyridoxal 5'-phosphate salvage; pyridoxal 5'-phosphate from pyridoxine 5'-phosphate: step 1/1. In terms of biological role, catalyzes the oxidation of either pyridoxine 5'-phosphate (PNP) or pyridoxamine 5'-phosphate (PMP) into pyridoxal 5'-phosphate (PLP). The protein is Pyridoxine/pyridoxamine 5'-phosphate oxidase of Rubrobacter xylanophilus (strain DSM 9941 / JCM 11954 / NBRC 16129 / PRD-1).